A 200-amino-acid chain; its full sequence is Holliday junction branch migration complex subunit RuvA (200 aa).

The interval 1 to 64 is domain I; that stretch reads MYAYFRGELI…EDLMQLYGFI (64 aa). The interval 65 to 143 is domain II; the sequence is EEEERQLFLL…KLQQTRPGKT (79 aa). Residues 144–154 form a flexible linker region; the sequence is AGAGSVASLSE. A domain III region spans residues 154–200; the sequence is EDALQALMTLGFSRASAQQAVTRALLSAENPGVEDIVREALQNIRNH.

This sequence belongs to the RuvA family. Homotetramer. Forms an RuvA(8)-RuvB(12)-Holliday junction (HJ) complex. HJ DNA is sandwiched between 2 RuvA tetramers; dsDNA enters through RuvA and exits via RuvB. An RuvB hexamer assembles on each DNA strand where it exits the tetramer. Each RuvB hexamer is contacted by two RuvA subunits (via domain III) on 2 adjacent RuvB subunits; this complex drives branch migration. In the full resolvosome a probable DNA-RuvA(4)-RuvB(12)-RuvC(2) complex forms which resolves the HJ.

It is found in the cytoplasm. Its function is as follows. The RuvA-RuvB-RuvC complex processes Holliday junction (HJ) DNA during genetic recombination and DNA repair, while the RuvA-RuvB complex plays an important role in the rescue of blocked DNA replication forks via replication fork reversal (RFR). RuvA specifically binds to HJ cruciform DNA, conferring on it an open structure. The RuvB hexamer acts as an ATP-dependent pump, pulling dsDNA into and through the RuvAB complex. HJ branch migration allows RuvC to scan DNA until it finds its consensus sequence, where it cleaves and resolves the cruciform DNA. This is Holliday junction branch migration complex subunit RuvA from Prosthecochloris aestuarii (strain DSM 271 / SK 413).